Consider the following 155-residue polypeptide: 6,7-dimethyl-8-ribityllumazine synthase (155 aa).

Residues Phe24, 58-60, and 82-84 each bind 5-amino-6-(D-ribitylamino)uracil; these read AFE and VLI. 87–88 is a (2S)-2-hydroxy-3-oxobutyl phosphate binding site; the sequence is AT. His90 acts as the Proton donor in catalysis. Phe115 contributes to the 5-amino-6-(D-ribitylamino)uracil binding site. Arg129 contributes to the (2S)-2-hydroxy-3-oxobutyl phosphate binding site.

Belongs to the DMRL synthase family.

The catalysed reaction is (2S)-2-hydroxy-3-oxobutyl phosphate + 5-amino-6-(D-ribitylamino)uracil = 6,7-dimethyl-8-(1-D-ribityl)lumazine + phosphate + 2 H2O + H(+). It participates in cofactor biosynthesis; riboflavin biosynthesis; riboflavin from 2-hydroxy-3-oxobutyl phosphate and 5-amino-6-(D-ribitylamino)uracil: step 1/2. In terms of biological role, catalyzes the formation of 6,7-dimethyl-8-ribityllumazine by condensation of 5-amino-6-(D-ribitylamino)uracil with 3,4-dihydroxy-2-butanone 4-phosphate. This is the penultimate step in the biosynthesis of riboflavin. The polypeptide is 6,7-dimethyl-8-ribityllumazine synthase (Chloroherpeton thalassium (strain ATCC 35110 / GB-78)).